The primary structure comprises 534 residues: C-22 sterol desaturase ERG5B (534 aa).

The chain crosses the membrane as a helical span at residues 43–61 (IAVTIFAVLIAYDQFMYIW). Position 480 (Cys480) interacts with heme.

The protein belongs to the cytochrome P450 family. Heme serves as cofactor.

Its subcellular location is the endoplasmic reticulum membrane. The enzyme catalyses 5-dehydroepisterol + NADPH + O2 + H(+) = ergosta-5,7,22,24(28)-tetraen-3beta-ol + NADP(+) + 2 H2O. Its pathway is steroid metabolism; ergosterol biosynthesis. In terms of biological role, C-22 sterol desaturase; part of the third module of ergosterol biosynthesis pathway that includes the late steps of the pathway. ERG5A and ERG5B convert 5-dehydroepisterol into ergosta-5,7,22,24(28)-tetraen-3beta-ol by forming the C-22(23) double bond in the sterol side chain. The third module or late pathway involves the ergosterol synthesis itself through consecutive reactions that mainly occur in the endoplasmic reticulum (ER) membrane. Firstly, the squalene synthase ERG9 catalyzes the condensation of 2 farnesyl pyrophosphate moieties to form squalene, which is the precursor of all steroids. Squalene synthase is crucial for balancing the incorporation of farnesyl diphosphate (FPP) into sterol and nonsterol isoprene synthesis. Secondly, squalene is converted into lanosterol by the consecutive action of the squalene epoxidase ERG1 and the lanosterol synthase ERG7. Then, the delta(24)-sterol C-methyltransferase ERG6 methylates lanosterol at C-24 to produce eburicol. Eburicol is the substrate of the sterol 14-alpha demethylase encoded by CYP51A, CYP51B and CYP51C, to yield 4,4,24-trimethyl ergosta-8,14,24(28)-trienol. CYP51B encodes the enzyme primarily responsible for sterol 14-alpha-demethylation, and plays an essential role in ascospore formation. CYP51A encodes an additional sterol 14-alpha-demethylase, induced on ergosterol depletion and responsible for the intrinsic variation in azole sensitivity. The third CYP51 isoform, CYP51C, does not encode a sterol 14-alpha-demethylase, but is required for full virulence on host wheat ears. The C-14 reductase ERG24 then reduces the C14=C15 double bond which leads to 4,4-dimethylfecosterol. A sequence of further demethylations at C-4, involving the C-4 demethylation complex containing the C-4 methylsterol oxidases ERG25, the sterol-4-alpha-carboxylate 3-dehydrogenase ERG26 and the 3-keto-steroid reductase ERG27, leads to the production of fecosterol via 4-methylfecosterol. ERG28 has a role as a scaffold to help anchor ERG25, ERG26 and ERG27 to the endoplasmic reticulum. The C-8 sterol isomerase ERG2 then catalyzes the reaction which results in unsaturation at C-7 in the B ring of sterols and thus converts fecosterol to episterol. The sterol-C5-desaturases ERG3A and ERG3BB then catalyze the introduction of a C-5 double bond in the B ring to produce 5-dehydroepisterol. The C-22 sterol desaturases ERG5A and ERG5B further convert 5-dehydroepisterol into ergosta-5,7,22,24(28)-tetraen-3beta-ol by forming the C-22(23) double bond in the sterol side chain. Finally, ergosta-5,7,22,24(28)-tetraen-3beta-ol is substrate of the C-24(28) sterol reductase ERG4 to produce ergosterol. The sequence is that of C-22 sterol desaturase ERG5B from Gibberella zeae (strain ATCC MYA-4620 / CBS 123657 / FGSC 9075 / NRRL 31084 / PH-1) (Wheat head blight fungus).